Here is a 266-residue protein sequence, read N- to C-terminus: Metallo-beta-lactamase VIM-1 (266 aa).

The first 20 residues, 1–20 (MLKVISSLLVYMTASVMAVA), serve as a signal peptide directing secretion. Positions 114, 116, 118, 179, 198, and 240 each coordinate Zn(2+).

The protein belongs to the metallo-beta-lactamase superfamily. Class-B beta-lactamase family. Monomer. The cofactor is Zn(2+).

Its subcellular location is the periplasm. The enzyme catalyses a beta-lactam + H2O = a substituted beta-amino acid. Its activity is regulated as follows. Weakly inhibited by beta-lactamase-blocking agent sulbactam. Class B beta-lactamase which confers resistance to the beta-lactam antibiotics, including penicillins, cephalosporins and carbapenems. Acts via hydrolysis of the beta-lactam ring. Has penicillin-, cephalosporin- and carbapenem-hydrolyzing activities. This is Metallo-beta-lactamase VIM-1 from Pseudomonas aeruginosa (strain ATCC 15692 / DSM 22644 / CIP 104116 / JCM 14847 / LMG 12228 / 1C / PRS 101 / PAO1).